The sequence spans 209 residues: TVP38/TMEM64 family membrane protein slr0305 (209 aa).

5 helical membrane passes run 15 to 35 (LGTW…VVFL), 39 to 59 (ILTL…YVFI), 110 to 130 (LSPV…NVSL), 134 to 154 (VIGS…GSLA), and 171 to 191 (LQWT…IYVT).

Belongs to the TVP38/TMEM64 family.

It localises to the cell membrane. This Synechocystis sp. (strain ATCC 27184 / PCC 6803 / Kazusa) protein is TVP38/TMEM64 family membrane protein slr0305.